We begin with the raw amino-acid sequence, 186 residues long: MSVKPAALFRISAALAVAGLGASLIASAALAQATSSRMQGLQLSNDQPIQIESDKLEIKDPESKAIFTGNVKVVQGTTTLQAGNMTVFYKAGGGSVTSGNADIDRIEVSNKVFLSSGAQQATGESGIVNLTNQTIVLKGKKVVLSEGKNVFVGCQLNVQMDTGEAQLDACGGRVQIQLDPQSRKTN.

The N-terminal stretch at 1 to 28 is a signal peptide; it reads MSVKPAALFRISAALAVAGLGASLIASA.

This is an uncharacterized protein from Rhizobium meliloti (strain 1021) (Ensifer meliloti).